A 188-amino-acid chain; its full sequence is UPF0301 protein Smlt1098 (188 aa).

The protein belongs to the UPF0301 (AlgH) family.

This chain is UPF0301 protein Smlt1098, found in Stenotrophomonas maltophilia (strain K279a).